Here is a 263-residue protein sequence, read N- to C-terminus: Acyl-[acyl-carrier-protein]--UDP-N-acetylglucosamine O-acyltransferase (263 aa).

The protein belongs to the transferase hexapeptide repeat family. LpxA subfamily. Homotrimer.

The protein localises to the cytoplasm. It catalyses the reaction a (3R)-hydroxyacyl-[ACP] + UDP-N-acetyl-alpha-D-glucosamine = a UDP-3-O-[(3R)-3-hydroxyacyl]-N-acetyl-alpha-D-glucosamine + holo-[ACP]. It functions in the pathway glycolipid biosynthesis; lipid IV(A) biosynthesis; lipid IV(A) from (3R)-3-hydroxytetradecanoyl-[acyl-carrier-protein] and UDP-N-acetyl-alpha-D-glucosamine: step 1/6. Functionally, involved in the biosynthesis of lipid A, a phosphorylated glycolipid that anchors the lipopolysaccharide to the outer membrane of the cell. The sequence is that of Acyl-[acyl-carrier-protein]--UDP-N-acetylglucosamine O-acyltransferase from Aeromonas salmonicida (strain A449).